The primary structure comprises 140 residues: Histone H2B (140 aa).

A compositionally biased stretch (basic and acidic residues) spans 1–10; it reads MPPKAAEKKP. Residues 1-48 are disordered; sequence MPPKAAEKKPTTGGKAPAGKAPAEKKEAGKKTAAAASGDKKKRGKTRK. N6-acetyllysine; alternate occurs at positions 8 and 9. Residues lysine 8 and lysine 9 each participate in a glycyl lysine isopeptide (Lys-Gly) (interchain with G-Cter in SUMO); alternate cross-link. Positions 11 to 21 are enriched in low complexity; the sequence is TTGGKAPAGKA. Lysine 15 carries the post-translational modification N6-acetyllysine. Position 25 is an N6-acetyllysine; alternate (lysine 25). Residue lysine 25 forms a Glycyl lysine isopeptide (Lys-Gly) (interchain with G-Cter in SUMO); alternate linkage. Residue lysine 26 forms a Glycyl lysine isopeptide (Lys-Gly) (interchain with G-Cter in SUMO) linkage. Lysine 134 is covalently cross-linked (Glycyl lysine isopeptide (Lys-Gly) (interchain with G-Cter in ubiquitin)).

Belongs to the histone H2B family. The nucleosome is a histone octamer containing two molecules each of H2A, H2B, H3 and H4 assembled in one H3-H4 heterotetramer and two H2A-H2B heterodimers. The octamer wraps approximately 147 bp of DNA. In terms of processing, monoubiquitinated by the ubc2-bre1 complex to form H2BK123ub1. H2BK123ub1 gives a specific tag for epigenetic transcriptional activation and is also prerequisite for H3K4me and H3K79me formation. H2BK123ub1 also modulates the formation of double-strand breaks during meiosis and is a prerequisite for DNA-damage checkpoint activation. Acetylated by gcn5 to form H2BK11ac and H2BK16ac. H2BK16ac can also be formed by esa1. Acetylation of N-terminal lysines and particularly formation of H2BK11acK16ac has a positive effect on transcription. Post-translationally, sumoylation to form H2BK6su or H2BK7su, and probably also H2BK16su or H2BK17su, occurs preferentially near the telomeres and represses gene transcription.

The protein resides in the nucleus. It is found in the chromosome. Its function is as follows. Core component of nucleosome. Nucleosomes wrap and compact DNA into chromatin, limiting DNA accessibility to the cellular machineries which require DNA as a template. Histones thereby play a central role in transcription regulation, DNA repair, DNA replication and chromosomal stability. DNA accessibility is regulated via a complex set of post-translational modifications of histones, also called histone code, and nucleosome remodeling. This is Histone H2B (htb1) from Aspergillus terreus (strain NIH 2624 / FGSC A1156).